Here is a 354-residue protein sequence, read N- to C-terminus: Chorismate synthase (354 aa).

Positions 48 and 54 each coordinate NADP(+). FMN-binding positions include 125–127, 238–239, Gly278, 293–297, and Arg319; these read RSS, NA, and KPTSS.

Belongs to the chorismate synthase family. As to quaternary structure, homotetramer. It depends on FMNH2 as a cofactor.

The catalysed reaction is 5-O-(1-carboxyvinyl)-3-phosphoshikimate = chorismate + phosphate. It functions in the pathway metabolic intermediate biosynthesis; chorismate biosynthesis; chorismate from D-erythrose 4-phosphate and phosphoenolpyruvate: step 7/7. In terms of biological role, catalyzes the anti-1,4-elimination of the C-3 phosphate and the C-6 proR hydrogen from 5-enolpyruvylshikimate-3-phosphate (EPSP) to yield chorismate, which is the branch point compound that serves as the starting substrate for the three terminal pathways of aromatic amino acid biosynthesis. This reaction introduces a second double bond into the aromatic ring system. The chain is Chorismate synthase from Blochmanniella pennsylvanica (strain BPEN).